The following is a 550-amino-acid chain: Coiled-coil domain-containing protein 102A (550 aa).

Disordered regions lie at residues 1 to 69 (MSHG…DGDW) and 138 to 247 (GARR…ATEE). Phosphoserine is present on residues S12, S26, and S28. Residues 37–61 (SLPPTPPSGTPSPGPPPALPLPPAP) are compositionally biased toward pro residues. Residues 72–161 (REELRLRELE…ARGRELARLR (90 aa)) adopt a coiled-coil conformation. Composition is skewed to basic and acidic residues over residues 138–159 (GARR…ELAR) and 169–188 (QTRD…DVGS). Coiled coils occupy residues 263–396 (QKVL…RRQT) and 427–518 (KLKK…NAPL). 2 disordered regions span residues 472-497 (DELD…QSEN) and 509-550 (LRRQ…IQVA). Residues 530–550 (EEAEDGTSDLDEDEDLQIQVA) show a composition bias toward acidic residues. S537 is subject to Phosphoserine.

The protein is Coiled-coil domain-containing protein 102A (CCDC102A) of Homo sapiens (Human).